The sequence spans 440 residues: Cytochrome c biogenesis protein Ccs1 (440 aa).

3 helical membrane-spanning segments follow: residues 19–39 (LRLA…GTFI), 78–98 (NIWF…CTYT), and 164–184 (VGPI…ACGA).

It belongs to the Ccs1/CcsB family. May interact with CcsA.

The protein resides in the plastid. Its subcellular location is the chloroplast thylakoid membrane. Its function is as follows. Required during biogenesis of c-type cytochromes (cytochrome c6 and cytochrome f) at the step of heme attachment. The protein is Cytochrome c biogenesis protein Ccs1 of Emiliania huxleyi (Coccolithophore).